We begin with the raw amino-acid sequence, 530 residues long: GMP synthase [glutamine-hydrolyzing] (530 aa).

Positions 4–205 (RILILDYGSQ…VKDICGCEGD (202 aa)) constitute a Glutamine amidotransferase type-1 domain. Cys84 functions as the Nucleophile in the catalytic mechanism. Residues His179 and Glu181 contribute to the active site. Residues 206–398 (WNMPDYISEA…LGLPPQMVYR (193 aa)) enclose the GMPS ATP-PPase domain. 233 to 239 (SGGVDSS) lines the ATP pocket.

Homodimer.

The catalysed reaction is XMP + L-glutamine + ATP + H2O = GMP + L-glutamate + AMP + diphosphate + 2 H(+). It functions in the pathway purine metabolism; GMP biosynthesis; GMP from XMP (L-Gln route): step 1/1. Catalyzes the synthesis of GMP from XMP. This Bordetella bronchiseptica (strain ATCC BAA-588 / NCTC 13252 / RB50) (Alcaligenes bronchisepticus) protein is GMP synthase [glutamine-hydrolyzing].